The sequence spans 264 residues: Orotidine 5'-phosphate decarboxylase (264 aa).

Substrate-binding positions include D37, 59–61, 91–100, Y217, and R235; these read KTH and DRKFADIGNT. K93 acts as the Proton donor in catalysis.

This sequence belongs to the OMP decarboxylase family.

It carries out the reaction orotidine 5'-phosphate + H(+) = UMP + CO2. It participates in pyrimidine metabolism; UMP biosynthesis via de novo pathway; UMP from orotate: step 2/2. The chain is Orotidine 5'-phosphate decarboxylase (URA3) from Torulaspora delbrueckii (Yeast).